Here is a 76-residue protein sequence, read N- to C-terminus: RNA-binding protein KhpA (76 aa).

Positions 29 to 76 constitute a KH domain; the sequence is SLTYKLSVSKEDMGRVIGKQGRIAKAIRTLVYAVGSKNDKKIRLEIIE.

The protein belongs to the KhpA RNA-binding protein family. As to quaternary structure, forms a complex with KhpB.

Its subcellular location is the cytoplasm. A probable RNA chaperone. Forms a complex with KhpB which binds to cellular RNA and controls its expression. Plays a role in peptidoglycan (PG) homeostasis and cell length regulation. This is RNA-binding protein KhpA from Listeria innocua serovar 6a (strain ATCC BAA-680 / CLIP 11262).